A 64-amino-acid polypeptide reads, in one-letter code: Lantipeptide Flvbeta.d (64 aa).

Residues 1 to 31 (MDNNTEKFNELAAIADESELNEMLDENITGA) constitute a propeptide, cleaved by FlvT. Residues 33–37 (STIQC) constitute a cross-link (lanthionine (Ser-Cys); by FlvM2). 2 positions are modified to 2,3-didehydrobutyrine; by FlvM2: Thr34 and Thr41. 3 cross-links (beta-methyllanthionine (Thr-Cys); by FlvM2) span residues 44–52 (TILSVVFDC), 55–58 (TSAC), and 59–62 (TPPC). A cross-link (lanthionine (Ser-Cys); by FlvM2) is located at residues 47–53 (SVVFDCC).

In terms of processing, contains LL-lanthionine, DL-lanthionine, and DL-beta-methyllanthionine, when coepressed in E.coli with the flavecin synthetase FlvM2.

The protein resides in the secreted. Lanthionine-containing peptide that does probably not show antibacterial activity, since its analog [+2]Flvbeta.d does not show antibacterial activity against M.luteus. Also does not show antibiotic activity when tested with [Del2]Flvalpha.a, an analog of Flvalpha.a, which is encoded by the same operon than Flvbeta.d. The bactericidal activity of lantibiotics is based on depolarization of energized bacterial cytoplasmic membranes, initiated by the formation of aqueous transmembrane pores. The sequence is that of Lantipeptide Flvbeta.d from Ruminococcus flavefaciens.